The primary structure comprises 227 residues: 2,3-bisphosphoglycerate-dependent phosphoglycerate mutase (227 aa).

Substrate contacts are provided by residues 7-14 (RHGFSEWN), 20-21 (TG), arginine 59, 86-89 (ERHY), lysine 97, 113-114 (RR), and 182-183 (GN). Histidine 8 functions as the Tele-phosphohistidine intermediate in the catalytic mechanism. Residue glutamate 86 is the Proton donor/acceptor of the active site.

Belongs to the phosphoglycerate mutase family. BPG-dependent PGAM subfamily. In terms of assembly, homodimer.

It catalyses the reaction (2R)-2-phosphoglycerate = (2R)-3-phosphoglycerate. Its pathway is carbohydrate degradation; glycolysis; pyruvate from D-glyceraldehyde 3-phosphate: step 3/5. Catalyzes the interconversion of 2-phosphoglycerate and 3-phosphoglycerate. The polypeptide is 2,3-bisphosphoglycerate-dependent phosphoglycerate mutase (Histophilus somni (strain 129Pt) (Haemophilus somnus)).